A 73-amino-acid polypeptide reads, in one-letter code: Conotoxin Cl14.8 (73 aa).

Positions Met-1–Gly-19 are cleaved as a signal peptide. Positions Phe-20–Gln-47 are excised as a propeptide.

The protein belongs to the conotoxin L superfamily. Post-translationally, contains 2 disulfide bonds. Expressed by the venom duct.

The protein resides in the secreted. This chain is Conotoxin Cl14.8, found in Californiconus californicus (California cone).